The primary structure comprises 20 residues: Cytochrome c oxidase subunit 8B, mitochondrial (20 aa).

Belongs to the cytochrome c oxidase VIII family. As to quaternary structure, component of the cytochrome c oxidase (complex IV, CIV), a multisubunit enzyme composed of 14 subunits. The complex is composed of a catalytic core of 3 subunits MT-CO1, MT-CO2 and MT-CO3, encoded in the mitochondrial DNA, and 11 supernumerary subunits COX4I, COX5A, COX5B, COX6A, COX6B, COX6C, COX7A, COX7B, COX7C, COX8 and NDUFA4, which are encoded in the nuclear genome. The complex exists as a monomer or a dimer and forms supercomplexes (SCs) in the inner mitochondrial membrane with NADH-ubiquinone oxidoreductase (complex I, CI) and ubiquinol-cytochrome c oxidoreductase (cytochrome b-c1 complex, complex III, CIII), resulting in different assemblies (supercomplex SCI(1)III(2)IV(1) and megacomplex MCI(2)III(2)IV(2)).

The protein localises to the mitochondrion inner membrane. Its pathway is energy metabolism; oxidative phosphorylation. Functionally, component of the cytochrome c oxidase, the last enzyme in the mitochondrial electron transport chain which drives oxidative phosphorylation. The respiratory chain contains 3 multisubunit complexes succinate dehydrogenase (complex II, CII), ubiquinol-cytochrome c oxidoreductase (cytochrome b-c1 complex, complex III, CIII) and cytochrome c oxidase (complex IV, CIV), that cooperate to transfer electrons derived from NADH and succinate to molecular oxygen, creating an electrochemical gradient over the inner membrane that drives transmembrane transport and the ATP synthase. Cytochrome c oxidase is the component of the respiratory chain that catalyzes the reduction of oxygen to water. Electrons originating from reduced cytochrome c in the intermembrane space (IMS) are transferred via the dinuclear copper A center (CU(A)) of subunit 2 and heme A of subunit 1 to the active site in subunit 1, a binuclear center (BNC) formed by heme A3 and copper B (CU(B)). The BNC reduces molecular oxygen to 2 water molecules using 4 electrons from cytochrome c in the IMS and 4 protons from the mitochondrial matrix. This Thunnus obesus (Bigeye tuna) protein is Cytochrome c oxidase subunit 8B, mitochondrial.